A 365-amino-acid polypeptide reads, in one-letter code: tRNA N6-adenosine threonylcarbamoyltransferase (365 aa).

Positions 119 and 123 each coordinate Fe cation. Substrate-binding positions include 141–145, D174, G187, and N289; that span reads LVSGG. D317 contacts Fe cation. A disordered region spans residues 341–365; sequence SARPRWPLDKTSPALIGSGKKGAKA.

This sequence belongs to the KAE1 / TsaD family. The cofactor is Fe(2+).

It is found in the cytoplasm. It carries out the reaction L-threonylcarbamoyladenylate + adenosine(37) in tRNA = N(6)-L-threonylcarbamoyladenosine(37) in tRNA + AMP + H(+). Required for the formation of a threonylcarbamoyl group on adenosine at position 37 (t(6)A37) in tRNAs that read codons beginning with adenine. Is involved in the transfer of the threonylcarbamoyl moiety of threonylcarbamoyl-AMP (TC-AMP) to the N6 group of A37, together with TsaE and TsaB. TsaD likely plays a direct catalytic role in this reaction. This Ruegeria sp. (strain TM1040) (Silicibacter sp.) protein is tRNA N6-adenosine threonylcarbamoyltransferase.